The sequence spans 841 residues: Rhomboid-like protease 5 (841 aa).

Residues 1-10 (MSSKGGSSRL) are compositionally biased toward low complexity. A disordered region spans residues 1 to 289 (MSSKGGSSRL…GGDGGPRRHS (289 aa)). Residues 11–51 (GSKDLKKMTSRTERELRDSGRVRGEVERVEKRLRATAKVKE) show a composition bias toward basic and acidic residues. The span at 95–132 (LRPASSSPRLASSSRPTESTLPSSSSRALQGASSSSSS) shows a compositional bias: low complexity. Basic and acidic residues-rich tracts occupy residues 154 to 163 (LRQEKKRLPE), 209 to 230 (RTAE…RGSV), and 243 to 275 (SSHE…RSGD). 6 helical membrane passes run 323-343 (FLMI…ELVL), 464-484 (MFRV…LLNV), 492-512 (WILE…VGGV), 526-546 (VTVG…PFSI), 571-590 (FGNM…GGLI), and 673-693 (FAAA…LLVP). The active-site Nucleophile is the Ser531. His585 is a catalytic residue.

The protein belongs to the peptidase S54 family.

It localises to the membrane. It catalyses the reaction Cleaves type-1 transmembrane domains using a catalytic dyad composed of serine and histidine that are contributed by different transmembrane domains.. Serine protease involved in intramembrane proteolysis. Cleaves microneme adhesins, such as MIC2. This step is essential for efficient invasion of host cells. Catalyzes intramembrane proteolysis of AMA1. This chain is Rhomboid-like protease 5 (ROM5), found in Toxoplasma gondii.